The sequence spans 852 residues: Polyphosphate kinase (852 aa).

Disordered regions lie at residues 1–36 (MATGVSSRDGSRERIRRRAVARDHPGCGPHRLDRPI) and 58–82 (SHDPAPSQSVGKRPQKSTKTASRRK). Positions 20–36 (VARDHPGCGPHRLDRPI) are enriched in basic and acidic residues. Residues 58 to 67 (SHDPAPSQSV) show a composition bias toward polar residues. N131 contacts ATP. Residues 251-303 (GDEIGPQRTPPPSDSLDNRVPSNLKRNSDTANQQPTPAENISAPEDGAEQTEP) are disordered. The tract at residues 258 to 303 (RTPPPSDSLDNRVPSNLKRNSDTANQQPTPAENISAPEDGAEQTEP) is insert. Polar residues predominate over residues 270 to 289 (VPSNLKRNSDTANQQPTPAE). 2 residues coordinate Mg(2+): R524 and R554. Residue H584 is the Phosphohistidine intermediate of the active site. ATP is bound by residues Y617, R713, and H741.

The protein belongs to the polyphosphate kinase 1 (PPK1) family. Requires Mg(2+) as cofactor. In terms of processing, an intermediate of this reaction is the autophosphorylated ppk in which a phosphate is covalently linked to a histidine residue through a N-P bond.

It carries out the reaction [phosphate](n) + ATP = [phosphate](n+1) + ADP. In terms of biological role, catalyzes the reversible transfer of the terminal phosphate of ATP to form a long-chain polyphosphate (polyP). The protein is Polyphosphate kinase of Rhodopirellula baltica (strain DSM 10527 / NCIMB 13988 / SH1).